The following is a 167-amino-acid chain: ATP synthase subunit b (167 aa).

Residues 9–29 (ALPLGNMLFIIIAFLLLMLIL) traverse the membrane as a helical segment.

This sequence belongs to the ATPase B chain family. As to quaternary structure, F-type ATPases have 2 components, F(1) - the catalytic core - and F(0) - the membrane proton channel. F(1) has five subunits: alpha(3), beta(3), gamma(1), delta(1), epsilon(1). F(0) has three main subunits: a(1), b(2) and c(10-14). The alpha and beta chains form an alternating ring which encloses part of the gamma chain. F(1) is attached to F(0) by a central stalk formed by the gamma and epsilon chains, while a peripheral stalk is formed by the delta and b chains.

The protein resides in the cell membrane. Its function is as follows. F(1)F(0) ATP synthase produces ATP from ADP in the presence of a proton or sodium gradient. F-type ATPases consist of two structural domains, F(1) containing the extramembraneous catalytic core and F(0) containing the membrane proton channel, linked together by a central stalk and a peripheral stalk. During catalysis, ATP synthesis in the catalytic domain of F(1) is coupled via a rotary mechanism of the central stalk subunits to proton translocation. Component of the F(0) channel, it forms part of the peripheral stalk, linking F(1) to F(0). This Leuconostoc mesenteroides subsp. mesenteroides (strain ATCC 8293 / DSM 20343 / BCRC 11652 / CCM 1803 / JCM 6124 / NCDO 523 / NBRC 100496 / NCIMB 8023 / NCTC 12954 / NRRL B-1118 / 37Y) protein is ATP synthase subunit b.